A 988-amino-acid chain; its full sequence is RecQ-like DNA helicase blm-1 (988 aa).

The tract at residues 46–119 (CEEREEEYID…QFPSRPQKRL (74 aa)) is disordered. Tandem repeats lie at residues 121–129 (DPPIVDLDE) and 130–138 (EPPIVDLDD). Positions 121–138 (DPPIVDLDEEPPIVDLDD) are 2 X 9 AA tandem repeats of [DE]-P-P-I-V-D-L-D-[ED]. Residues 148 to 185 (TSEEVVSGDIAPEEEEEEGHDSFDDFESVPAQPPSKNT) are disordered. A compositionally biased stretch (acidic residues) spans 158 to 174 (APEEEEEEGHDSFDDFE). Residues 248 to 252 (FRHRQ) and 272 to 276 (GAGKS) contribute to the ATP site. One can recognise a Helicase ATP-binding domain in the interval 256-433 (ILSTLMGHDT…RDHLKMQNSK (178 aa)). The DEAH box signature appears at 375 to 378 (DEAH). One can recognise a Helicase C-terminal domain in the interval 458–603 (NVVEKMKQLY…VRSMHLNNVL (146 aa)). The segment at 478–480 (SRK) is 3' overhang DNA-binding. Arg-562 contacts ATP. A 3' overhang DNA-binding region spans residues 580–583 (RLRR). Residues Cys-615, Cys-633, Cys-640, and Cys-643 each contribute to the Zn(2+) site. 3 3' overhang DNA-binding regions span residues 676-678 (TLK), 687-691 (ALIKK), and 736-742 (YSVPNQA). In terms of domain architecture, HRDC spans 807 to 888 (GDVFTRCLQD…ATYWKQVDER (82 aa)). The tract at residues 930–988 (GGGGCRGRGKKRAFSGFSSGRATKKPRATAPSARGKTSGRGGAKPATSLKRNMYPATSM) is disordered. The Nuclear localization signal signature appears at 939–955 (KKRAFSGFSSGRATKKP).

Belongs to the helicase family. RecQ subfamily. In terms of assembly, monomer. Homodimer (via N-terminus). Homotetramer (via N-terminus); dimer of dimers. Homohexamer (via N-terminus). Self-association negatively regulates DNA unwinding amplitude and rate. Oligomer forms dissociate into monomer in presence of ATP. Component of the BTR double Holliday Junction dissolution complex composed of at least him-6, top-3, rmh-1 and rmif-2, which is involved in double strand break repair in the germline. May interact with rmh-1; the interaction is required for mutual stability and localization at nuclear foci. Forms a complex composed of cdc-48.1, him-6 and crp-1; within the complex, interacts with cdc-48.1. The cofactor is Zn(2+).

The protein localises to the nucleus. Its subcellular location is the chromosome. The catalysed reaction is Couples ATP hydrolysis with the unwinding of duplex DNA by translocating in the 3'-5' direction.. It catalyses the reaction ATP + H2O = ADP + phosphate + H(+). Component of the BTR double Holliday Junction dissolution complex, which is involved in homologous recombination during meiotic double strand break in the germline. Stabilizes and positively regulates the localization of the BTR double Holliday Junction dissolution complex component rmh-1 at nuclear foci during meiotic recombination. Participates in DNA replication and repair. Exhibits a magnesium-dependent ATP-dependent DNA-helicase activity that unwinds single- and double-stranded DNA in a 3'-5' direction. Negatively regulates sister chromatid exchange (SCE). In terms of biological role, ATP-dependent DNA helicase that unwinds single- and double-stranded DNA in a 3'-5' direction. Participates in DNA replication and repair. Negatively regulates sister chromatid exchange (SCE). Stimulates DNA 4-way junction branch migration and DNA Holliday junction dissolution. Binds single-stranded DNA (ssDNA), forked duplex DNA and DNA Holliday junction. The sequence is that of RecQ-like DNA helicase blm-1 from Caenorhabditis elegans.